Reading from the N-terminus, the 185-residue chain is MSRLLEESLKTCPIVKRGEYHYFIHPISDGVPLVEPELLRDISTRVIKMIDTEVDKIVTAEAMGIPIVTAVSIATDIPYVIMRKREYLLEGEIPVHQETGYSKGELYLNGINKGDKVVILDDVISTGGTLVAIINALKRAGADIRDVLCIIDRGNGQNIVEEKTGYKVKTLVKIEVVDGKVQILK.

It belongs to the purine/pyrimidine phosphoribosyltransferase family. Archaeal HPRT subfamily. As to quaternary structure, homodimer.

It localises to the cytoplasm. The catalysed reaction is IMP + diphosphate = hypoxanthine + 5-phospho-alpha-D-ribose 1-diphosphate. The enzyme catalyses GMP + diphosphate = guanine + 5-phospho-alpha-D-ribose 1-diphosphate. The protein operates within purine metabolism; IMP biosynthesis via salvage pathway; IMP from hypoxanthine: step 1/1. In terms of biological role, catalyzes a salvage reaction resulting in the formation of IMP that is energically less costly than de novo synthesis. The sequence is that of Hypoxanthine/guanine phosphoribosyltransferase from Methanococcus maripaludis (strain C5 / ATCC BAA-1333).